We begin with the raw amino-acid sequence, 310 residues long: ADP-L-glycero-D-manno-heptose-6-epimerase (310 aa).

Residues 10-11 (FI), 31-32 (DN), Lys-38, Lys-53, 75-79 (EGACS), and Asn-92 each bind NADP(+). Residue Tyr-140 is the Proton acceptor of the active site. An NADP(+)-binding site is contributed by Lys-144. Asn-169 is a binding site for substrate. Residues Val-170 and Lys-178 each contribute to the NADP(+) site. The Proton acceptor role is filled by Lys-178. Substrate is bound by residues Ser-180, His-187, 201 to 204 (FEGS), Arg-209, and Tyr-272.

This sequence belongs to the NAD(P)-dependent epimerase/dehydratase family. HldD subfamily. In terms of assembly, homopentamer. NADP(+) is required as a cofactor.

The enzyme catalyses ADP-D-glycero-beta-D-manno-heptose = ADP-L-glycero-beta-D-manno-heptose. The protein operates within nucleotide-sugar biosynthesis; ADP-L-glycero-beta-D-manno-heptose biosynthesis; ADP-L-glycero-beta-D-manno-heptose from D-glycero-beta-D-manno-heptose 7-phosphate: step 4/4. Its function is as follows. Catalyzes the interconversion between ADP-D-glycero-beta-D-manno-heptose and ADP-L-glycero-beta-D-manno-heptose via an epimerization at carbon 6 of the heptose. The protein is ADP-L-glycero-D-manno-heptose-6-epimerase of Citrobacter koseri (strain ATCC BAA-895 / CDC 4225-83 / SGSC4696).